The chain runs to 374 residues: SH2 domain-containing protein 2A (374 aa).

The region spanning 116 to 207 (WFHGFITRRE…PYGEILTQPL (92 aa)) is the SH2 domain. Residues 213–232 (EPAGLSLRADSDSGSKRQDP) are disordered. Residues 221-232 (ADSDSGSKRQDP) show a composition bias toward basic and acidic residues. A Phosphoserine modification is found at Ser-237. The segment at 241-301 (QQGQAQASGH…QAPPINPIYQ (61 aa)) is disordered. The span at 256-266 (ASQQKATSQAS) shows a compositional bias: polar residues. The SH3-binding motif lies at 267-273 (RPRPPIP). Pro residues predominate over residues 268–279 (PRPPIPAKPQLP). A Phosphoserine modification is found at Ser-316. Disordered stretches follow at residues 321 to 340 (PSNI…IGHP) and 353 to 374 (GQVR…GSPS).

Interacts with KDR. Interacts with p56-LCK, TXK and ITK. Phosphorylated on tyrosine residues upon TCR-stimulation. In terms of tissue distribution, expression limited to tissues of the immune system and, in particular, activated T-cells and natural killer cells. Expressed in the thymus, lymph node, and to a lesser extent, in the spleen and bone marrow. According to PubMed:10553045, also expressed in the lung.

The protein localises to the cytoplasm. Its subcellular location is the cell membrane. Its function is as follows. Could be a T-cell-specific adapter protein involved in the control of T-cell activation. May play a role in p56-LCK-mediated T-cell signaling. Could be involved in the regulation of responses to T-cell activation stimuli, specifically proliferation and lymphokine production. Interactions with ITK and TXK may provide important biochemical links of these two important kinases with other components in the T-cell activation machinery. The polypeptide is SH2 domain-containing protein 2A (Sh2d2a) (Mus musculus (Mouse)).